A 253-amino-acid chain; its full sequence is 5-oxoprolinase subunit A (253 aa).

The protein belongs to the LamB/PxpA family. As to quaternary structure, forms a complex composed of PxpA, PxpB and PxpC.

The enzyme catalyses 5-oxo-L-proline + ATP + 2 H2O = L-glutamate + ADP + phosphate + H(+). Its function is as follows. Catalyzes the cleavage of 5-oxoproline to form L-glutamate coupled to the hydrolysis of ATP to ADP and inorganic phosphate. In Bacillus anthracis (strain CDC 684 / NRRL 3495), this protein is 5-oxoprolinase subunit A.